The chain runs to 212 residues: Imidazole glycerol phosphate synthase subunit HisH (212 aa).

One can recognise a Glutamine amidotransferase type-1 domain in the interval 2–212 (LTAIIDYESG…MIGNFLTWTP (211 aa)). Residue Cys87 is the Nucleophile of the active site. Active-site residues include His192 and Glu194.

As to quaternary structure, heterodimer of HisH and HisF.

The protein localises to the cytoplasm. The enzyme catalyses 5-[(5-phospho-1-deoxy-D-ribulos-1-ylimino)methylamino]-1-(5-phospho-beta-D-ribosyl)imidazole-4-carboxamide + L-glutamine = D-erythro-1-(imidazol-4-yl)glycerol 3-phosphate + 5-amino-1-(5-phospho-beta-D-ribosyl)imidazole-4-carboxamide + L-glutamate + H(+). The catalysed reaction is L-glutamine + H2O = L-glutamate + NH4(+). The protein operates within amino-acid biosynthesis; L-histidine biosynthesis; L-histidine from 5-phospho-alpha-D-ribose 1-diphosphate: step 5/9. IGPS catalyzes the conversion of PRFAR and glutamine to IGP, AICAR and glutamate. The HisH subunit catalyzes the hydrolysis of glutamine to glutamate and ammonia as part of the synthesis of IGP and AICAR. The resulting ammonia molecule is channeled to the active site of HisF. In Ruegeria pomeroyi (strain ATCC 700808 / DSM 15171 / DSS-3) (Silicibacter pomeroyi), this protein is Imidazole glycerol phosphate synthase subunit HisH.